Here is a 464-residue protein sequence, read N- to C-terminus: Probable 1,4-beta-D-glucan cellobiohydrolase C (464 aa).

Residues 1 to 19 (MKNFAPSLALSLLLPTVQA) form the signal peptide. The 36-residue stretch at 20–55 (QQTMWGQCGGAGWSGATDCVAGGVCSTQNAYYAQCL) folds into the CBM1 domain. Intrachain disulfides connect C27-C44 and C38-C54. A thr-rich linker region spans residues 59-102 (TTATTLSTTSKGTTTTTTSSTTSTGGGSSSTTTKTSTSAGPTVT). Positions 65 to 100 (STTSKGTTTTTTSSTTSTGGGSSSTTTKTSTSAGPT) are enriched in low complexity. Residues 65–108 (STTSKGTTTTTTSSTTSTGGGSSSTTTKTSTSAGPTVTGSPSGN) form a disordered region. The segment at 103–464 (GSPSGNPFSG…QLLTNANPAF (362 aa)) is catalytic. D194 is an active-site residue. Disulfide bonds link C195/C254 and C386/C433. Residue D240 is the Proton donor of the active site. D419 functions as the Nucleophile in the catalytic mechanism.

It belongs to the glycosyl hydrolase 6 (cellulase B) family.

The protein localises to the secreted. It carries out the reaction Hydrolysis of (1-&gt;4)-beta-D-glucosidic linkages in cellulose and cellotetraose, releasing cellobiose from the non-reducing ends of the chains.. In terms of biological role, the biological conversion of cellulose to glucose generally requires three types of hydrolytic enzymes: (1) Endoglucanases which cut internal beta-1,4-glucosidic bonds; (2) Exocellobiohydrolases that cut the disaccharide cellobiose from the non-reducing end of the cellulose polymer chain; (3) Beta-1,4-glucosidases which hydrolyze the cellobiose and other short cello-oligosaccharides to glucose. The protein is Probable 1,4-beta-D-glucan cellobiohydrolase C (cbhC) of Aspergillus clavatus (strain ATCC 1007 / CBS 513.65 / DSM 816 / NCTC 3887 / NRRL 1 / QM 1276 / 107).